A 593-amino-acid chain; its full sequence is La-related protein 7 (593 aa).

The span at 1-11 (MTAIETDTPSN) shows a compositional bias: polar residues. Positions 1–28 (MTAIETDTPSNKVKEDESTDLRKDREKK) are disordered. A compositionally biased stretch (basic and acidic residues) spans 12–24 (KVKEDESTDLRKD). The HTH La-type RNA-binding domain occupies 30–121 (RSRVKQLLAD…RRRFPLGEKP (92 aa)). Residues 127–205 (RTVYVELLPK…PRKAGMFPKT (79 aa)) form the RRM domain. The tract at residues 191 to 363 (PPEEAPRKAG…STEEEKDAVD (173 aa)) is disordered. Residues 231 to 240 (KKKKKKKSKA) are compositionally biased toward basic residues. The span at 248 to 259 (AEEDTKEQDMDI) shows a compositional bias: acidic residues. Composition is skewed to basic and acidic residues over residues 295-307 (ERAESFDQSEKVR), 314-340 (SSSEEHDCSSAKQKKSDTKDLPQDEKP), and 348-363 (QECKELSTEEEKDAVD). One can recognise a xRRM domain in the interval 461–574 (QFVCGVIGKI…TEKLIAKAEK (114 aa)).

This sequence belongs to the LARP7 family. As to quaternary structure, core component of the 7SK RNP complex. Associates with box C/D small nucleolar ribonucleoprotein (snoRNP) complexes.

It is found in the nucleus. It localises to the nucleoplasm. Its function is as follows. RNA-binding protein that specifically binds distinct small nuclear RNA (snRNAs) and regulates their processing and function. Specifically binds the 7SK snRNA (7SK RNA) and acts as a core component of the 7SK ribonucleoprotein (RNP) complex, thereby acting as a negative regulator of transcription elongation by RNA polymerase II. The 7SK RNP complex sequesters the positive transcription elongation factor b (P-TEFb) in a large inactive 7SK RNP complex preventing RNA polymerase II phosphorylation and subsequent transcriptional elongation. The 7SK RNP complex also promotes snRNA gene transcription by RNA polymerase II via interaction with the little elongation complex (LEC). LARP7 specifically binds to the highly conserved 3'-terminal U-rich stretch of 7SK RNA; on stimulation, remains associated with 7SK RNA, whereas P-TEFb is released from the complex. LARP7 also acts as a regulator of mRNA splicing fidelity by promoting U6 snRNA processing. Specifically binds U6 snRNAs and associates with a subset of box C/D RNP complexes: promotes U6 snRNA 2'-O-methylation by facilitating U6 snRNA loading into box C/D RNP complexes. U6 snRNA 2'-O-methylation is required for mRNA splicing fidelity. The chain is La-related protein 7 from Xenopus tropicalis (Western clawed frog).